Reading from the N-terminus, the 307-residue chain is 4-hydroxythreonine-4-phosphate dehydrogenase (307 aa).

Substrate contacts are provided by His-126 and Thr-127. A divalent metal cation is bound by residues His-156, His-195, and His-251. Residues Lys-259, Asn-268, and Arg-277 each coordinate substrate.

The protein belongs to the PdxA family. Homodimer. It depends on Zn(2+) as a cofactor. Mg(2+) is required as a cofactor. The cofactor is Co(2+).

It is found in the cytoplasm. The catalysed reaction is 4-(phosphooxy)-L-threonine + NAD(+) = 3-amino-2-oxopropyl phosphate + CO2 + NADH. It functions in the pathway cofactor biosynthesis; pyridoxine 5'-phosphate biosynthesis; pyridoxine 5'-phosphate from D-erythrose 4-phosphate: step 4/5. Functionally, catalyzes the NAD(P)-dependent oxidation of 4-(phosphooxy)-L-threonine (HTP) into 2-amino-3-oxo-4-(phosphooxy)butyric acid which spontaneously decarboxylates to form 3-amino-2-oxopropyl phosphate (AHAP). This chain is 4-hydroxythreonine-4-phosphate dehydrogenase, found in Helicobacter pylori (strain HPAG1).